The sequence spans 1406 residues: DNA-directed RNA polymerase subunit beta' (1406 aa).

Residues cysteine 70, cysteine 72, cysteine 85, and cysteine 88 each contribute to the Zn(2+) site. Residues aspartate 460, aspartate 462, and aspartate 464 each coordinate Mg(2+). Residues cysteine 814, cysteine 888, cysteine 895, and cysteine 898 each contribute to the Zn(2+) site.

The protein belongs to the RNA polymerase beta' chain family. As to quaternary structure, the RNAP catalytic core consists of 2 alpha, 1 beta, 1 beta' and 1 omega subunit. When a sigma factor is associated with the core the holoenzyme is formed, which can initiate transcription. Requires Mg(2+) as cofactor. Zn(2+) is required as a cofactor.

The catalysed reaction is RNA(n) + a ribonucleoside 5'-triphosphate = RNA(n+1) + diphosphate. Functionally, DNA-dependent RNA polymerase catalyzes the transcription of DNA into RNA using the four ribonucleoside triphosphates as substrates. The chain is DNA-directed RNA polymerase subunit beta' from Sodalis glossinidius (strain morsitans).